Consider the following 206-residue polypeptide: Carbonic anhydrase (206 aa).

Residue Lys11 forms an Isoglutamyl lysine isopeptide (Lys-Gln) (interchain with Q-Cter in protein Pup) linkage. Residues Cys51, Asp53, His104, and Cys107 each contribute to the Zn(2+) site.

The protein belongs to the beta-class carbonic anhydrase family. As to quaternary structure, homotetramer. Zn(2+) serves as cofactor.

It carries out the reaction hydrogencarbonate + H(+) = CO2 + H2O. Its function is as follows. Catalyzes the reversible hydration of carbon dioxide to form bicarbonate. This is Carbonic anhydrase (cynT) from Mycolicibacterium smegmatis (strain ATCC 700084 / mc(2)155) (Mycobacterium smegmatis).